The following is a 361-amino-acid chain: dTDP-glucose 4,6-dehydratase (361 aa).

NAD(+) is bound by residues 11–12, 32–35, 58–59, 80–84, and T99; these read FI, DKLT, DI, and LAAES. S84 is a binding site for substrate. T133 serves as a coordination point for substrate. Residue D134 is the Proton donor of the active site. Catalysis depends on proton acceptor residues E135 and Y167. 167–171 lines the NAD(+) pocket; the sequence is YSASK. N196 provides a ligand contact to substrate. N197 is an NAD(+) binding site. Residues 206–207, 222–224, R231, N266, 296–300, and Y357 each bind substrate; these read KL, PIY, and DRPGH.

It belongs to the NAD(P)-dependent epimerase/dehydratase family. dTDP-glucose dehydratase subfamily. Homodimer. It depends on NAD(+) as a cofactor.

It catalyses the reaction dTDP-alpha-D-glucose = dTDP-4-dehydro-6-deoxy-alpha-D-glucose + H2O. It participates in carbohydrate biosynthesis; dTDP-L-rhamnose biosynthesis. Its pathway is bacterial outer membrane biogenesis; LPS O-antigen biosynthesis. Its function is as follows. Catalyzes the dehydration of dTDP-D-glucose to form dTDP-6-deoxy-D-xylo-4-hexulose via a three-step process involving oxidation, dehydration and reduction. The protein is dTDP-glucose 4,6-dehydratase of Salmonella typhimurium (strain LT2 / SGSC1412 / ATCC 700720).